Reading from the N-terminus, the 365-residue chain is Quinolone epoxide rearrangement protein asqO (365 aa).

It belongs to the quinolone epoxide rearrangement protein penF family.

It carries out the reaction (1'E,3'E)-5-(3,3-dimethyloxiran-2-yl)-3-methylhexa-1,3-dienyl-quinolinone B = aspoquinolone A. The enzyme catalyses (1'E,3'E)-5-(3,3-dimethyloxiran-2-yl)-3-methylhexa-1,3-dienyl-quinolinone B = aspoquinolone B. It functions in the pathway secondary metabolite biosynthesis. It participates in alkaloid biosynthesis. The protein operates within mycotoxin biosynthesis. Its function is as follows. Quinolone epoxide rearrangement protein; part of the gene cluster that mediates the biosynthesis of the aspoquinolone mycotoxins. Within the pathway, asqO catalyzes an enzymatic 3-exo-tet cyclization to yield the cyclopropyl-THF ring system in aspoquinolone. The first step of the pathway is catalyzed by the nonribosomal peptide synthetase asqK that condenses anthranilic acid and O-methyl-L-tyrosine to produce 4'-methoxycyclopeptin. 4'-methoxycyclopeptin is then converted to 4'-methoxydehydrocyclopeptin by the ketoglutarate-dependent dioxygenase asqJ. AsqJ also converts its first product 4'-methoxydehydrocyclopeptin to 4'-methoxycyclopenin. The following conversion of 4'-methoxycyclopenin into 4'-methoxyviridicatin is catalyzed by the cyclopenase asqI. 4'-methoxyviridicatin is the precursor of quinolone natural products, and is further converted to quinolinone B. The prenyltransferase asqH1 then catalyzes the canonical Friedel-Crafts alkylation of quinolinone B with dimethylallyl cation to yield dimethylallyl quinolone, which is subjected to FAD-dependent dehydrogenation by the FAD-linked oxidoreductase asqF to yield conjugated aryl diene. The delta(3') double bond then serves as the site of the second alkylation with DMAPP catalyzed by the prenyltransferase asqH2 to yield a carbenium ion intermediate, which can be attacked by H(2)O to yield a styrenyl quinolone containing a C3'-hydroxyprenyl chain. The FAD-dependent monooxygenase asqG performs epoxidation of the terminal C7'-C8' olefin. Finally, after dehydratation of the epoxide at C3 by asqC, the quinolone epoxide rearrangement protein asqO catalyzes an enzymatic 3-exo-tet cyclization to yield the cyclopropyl-THF ring system in aspoquinolone. This chain is Quinolone epoxide rearrangement protein asqO, found in Emericella nidulans (strain FGSC A4 / ATCC 38163 / CBS 112.46 / NRRL 194 / M139) (Aspergillus nidulans).